The following is a 262-amino-acid chain: 5'-nucleotidase SurE (262 aa).

A divalent metal cation-binding residues include aspartate 11, aspartate 12, serine 43, and asparagine 101.

The protein belongs to the SurE nucleotidase family. A divalent metal cation is required as a cofactor.

It is found in the cytoplasm. It catalyses the reaction a ribonucleoside 5'-phosphate + H2O = a ribonucleoside + phosphate. Its function is as follows. Nucleotidase that shows phosphatase activity on nucleoside 5'-monophosphates. The protein is 5'-nucleotidase SurE of Prochlorococcus marinus (strain NATL2A).